Here is an 836-residue protein sequence, read N- to C-terminus: Phenylalanine--tRNA ligase beta subunit (836 aa).

The tRNA-binding domain occupies P44–R160. A B5 domain is found at P420–T495. 4 residues coordinate Mg(2+): D473, D479, E482, and E483. The FDX-ACB domain maps to S742 to R835.

It belongs to the phenylalanyl-tRNA synthetase beta subunit family. Type 1 subfamily. As to quaternary structure, tetramer of two alpha and two beta subunits. The cofactor is Mg(2+).

Its subcellular location is the cytoplasm. It carries out the reaction tRNA(Phe) + L-phenylalanine + ATP = L-phenylalanyl-tRNA(Phe) + AMP + diphosphate + H(+). In Corynebacterium diphtheriae (strain ATCC 700971 / NCTC 13129 / Biotype gravis), this protein is Phenylalanine--tRNA ligase beta subunit.